The sequence spans 201 residues: Large ribosomal subunit protein eL15B (201 aa).

The tract at residues 161–182 (SRGLTSIGKKSRGIGKGHRYNN) is disordered. Positions 169–179 (KKSRGIGKGHR) are enriched in basic residues. Ser183 carries the post-translational modification Phosphoserine.

Belongs to the eukaryotic ribosomal protein eL15 family. As to quaternary structure, component of the large ribosomal subunit (LSU). Mature yeast ribosomes consist of a small (40S) and a large (60S) subunit. The 40S small subunit contains 1 molecule of ribosomal RNA (18S rRNA) and at least 33 different proteins. The large 60S subunit contains 3 rRNA molecules (25S, 5.8S and 5S rRNA) and at least 46 different proteins.

It localises to the cytoplasm. The protein localises to the nucleus. It is found in the nucleolus. Functionally, component of the ribosome, a large ribonucleoprotein complex responsible for the synthesis of proteins in the cell. The small ribosomal subunit (SSU) binds messenger RNAs (mRNAs) and translates the encoded message by selecting cognate aminoacyl-transfer RNA (tRNA) molecules. The large subunit (LSU) contains the ribosomal catalytic site termed the peptidyl transferase center (PTC), which catalyzes the formation of peptide bonds, thereby polymerizing the amino acids delivered by tRNAs into a polypeptide chain. The nascent polypeptides leave the ribosome through a tunnel in the LSU and interact with protein factors that function in enzymatic processing, targeting, and the membrane insertion of nascent chains at the exit of the ribosomal tunnel. The protein is Large ribosomal subunit protein eL15B (rpl1502) of Schizosaccharomyces pombe (strain 972 / ATCC 24843) (Fission yeast).